A 129-amino-acid chain; its full sequence is Lysozyme C (129 aa).

In terms of domain architecture, C-type lysozyme spans lysine 1–leucine 129. 4 disulfide bridges follow: cysteine 6-cysteine 127, cysteine 30-cysteine 115, cysteine 64-cysteine 80, and cysteine 76-cysteine 94. Catalysis depends on residues glutamate 35 and aspartate 52.

This sequence belongs to the glycosyl hydrolase 22 family. In terms of assembly, monomer.

It localises to the secreted. It catalyses the reaction Hydrolysis of (1-&gt;4)-beta-linkages between N-acetylmuramic acid and N-acetyl-D-glucosamine residues in a peptidoglycan and between N-acetyl-D-glucosamine residues in chitodextrins.. Lysozymes have primarily a bacteriolytic function; those in tissues and body fluids are associated with the monocyte-macrophage system and enhance the activity of immunoagents. The protein is Lysozyme C (LYZ) of Syrmaticus reevesii (Reeves's pheasant).